The sequence spans 498 residues: ATP synthase subunit beta, chloroplastic (498 aa).

172–179 is a binding site for ATP; sequence GGAGVGKT.

This sequence belongs to the ATPase alpha/beta chains family. In terms of assembly, F-type ATPases have 2 components, CF(1) - the catalytic core - and CF(0) - the membrane proton channel. CF(1) has five subunits: alpha(3), beta(3), gamma(1), delta(1), epsilon(1). CF(0) has four main subunits: a(1), b(1), b'(1) and c(9-12).

The protein resides in the plastid. It is found in the chloroplast thylakoid membrane. It carries out the reaction ATP + H2O + 4 H(+)(in) = ADP + phosphate + 5 H(+)(out). Its function is as follows. Produces ATP from ADP in the presence of a proton gradient across the membrane. The catalytic sites are hosted primarily by the beta subunits. The chain is ATP synthase subunit beta, chloroplastic from Montinia caryophyllacea (Wild clove bush).